A 659-amino-acid chain; its full sequence is Threonine--tRNA ligase (659 aa).

The region spanning 7-70 is the TGS domain; it reads DSELIKLTLP…QQDGAIEIVT (64 aa). A catalytic region spans residues 253 to 555; sequence DHRKLGSELE…LIENFAGNFP (303 aa). Zn(2+) is bound by residues Cys-351, His-402, and His-532.

The protein belongs to the class-II aminoacyl-tRNA synthetase family. As to quaternary structure, homodimer. It depends on Zn(2+) as a cofactor.

Its subcellular location is the cytoplasm. It carries out the reaction tRNA(Thr) + L-threonine + ATP = L-threonyl-tRNA(Thr) + AMP + diphosphate + H(+). Its function is as follows. Catalyzes the attachment of threonine to tRNA(Thr) in a two-step reaction: L-threonine is first activated by ATP to form Thr-AMP and then transferred to the acceptor end of tRNA(Thr). Also edits incorrectly charged L-seryl-tRNA(Thr). This is Threonine--tRNA ligase from Chloroherpeton thalassium (strain ATCC 35110 / GB-78).